Here is a 489-residue protein sequence, read N- to C-terminus: MFS-type transporter MFS19 (489 aa).

Residues 1–12 (MAHSTAGDRDPE) show a composition bias toward basic and acidic residues. The segment at 1–42 (MAHSTAGDRDPEVGSEQHSSIAQLHTESMSDPWGDSNSPENP) is disordered. Residues 16–41 (EQHSSIAQLHTESMSDPWGDSNSPEN) show a composition bias toward polar residues. The chain crosses the membrane as a helical span at residues 52–72 (FHVAIVSIFTLTANLAATMFA). Residues asparagine 83 and asparagine 86 are each glycosylated (N-linked (GlcNAc...) asparagine). Transmembrane regions (helical) follow at residues 91–111 (AMTV…LAPL), 127–147 (VYIA…FLVF), 149–169 (FLCG…VADI), 180–200 (ALFA…GGYV), 208–228 (WTFR…MFFM), 282–302 (PIVL…FLLF), 321–341 (GLAY…FSIL), 361–381 (LILM…YGWS), 388–408 (WIVP…VVIP), 425–445 (ALAA…LVAA), and 454–474 (GWGN…PWLF).

This sequence belongs to the major facilitator superfamily.

The protein localises to the cell membrane. MFS-type efflux pump involved in the modulation susceptibility to various compounds including cumyl hydroperoxide, potassium superoxide, many singlet oxygen-generating compounds (eosin Y, rose Bengal, hematoporphyrin, methylene blue, and cercosporin), and the cell wall biosynthesis inhibitor Congo red. Involved in oxidative stress tolerance, colonization, and lesion formation. The chain is MFS-type transporter MFS19 from Alternaria alternata (Alternaria rot fungus).